Consider the following 370-residue polypeptide: tRNA-specific 2-thiouridylase MnmA (370 aa).

ATP-binding positions include Ala-24–Ser-31 and Leu-50. Cys-119 serves as the catalytic Nucleophile. An intrachain disulfide couples Cys-119 to Cys-215. Gly-143 serves as a coordination point for ATP. An interaction with tRNA region spans residues Lys-165–Gln-167. Catalysis depends on Cys-215, which acts as the Cysteine persulfide intermediate.

Belongs to the MnmA/TRMU family.

It localises to the cytoplasm. It catalyses the reaction S-sulfanyl-L-cysteinyl-[protein] + uridine(34) in tRNA + AH2 + ATP = 2-thiouridine(34) in tRNA + L-cysteinyl-[protein] + A + AMP + diphosphate + H(+). In terms of biological role, catalyzes the 2-thiolation of uridine at the wobble position (U34) of tRNA, leading to the formation of s(2)U34. In Wolbachia sp. subsp. Drosophila simulans (strain wRi), this protein is tRNA-specific 2-thiouridylase MnmA.